Here is a 309-residue protein sequence, read N- to C-terminus: Electron transfer flavoprotein subunit alpha (309 aa).

Residue 253–281 (LYIAVGISGAIQHLAGMKDSKVIVAINKD) participates in FAD binding.

The protein belongs to the ETF alpha-subunit/FixB family. In terms of assembly, heterodimer of an alpha and a beta subunit. The cofactor is FAD.

Its function is as follows. The electron transfer flavoprotein serves as a specific electron acceptor for other dehydrogenases. It transfers the electrons to the main respiratory chain via ETF-ubiquinone oxidoreductase (ETF dehydrogenase). The polypeptide is Electron transfer flavoprotein subunit alpha (etfA) (Pseudomonas aeruginosa (strain ATCC 15692 / DSM 22644 / CIP 104116 / JCM 14847 / LMG 12228 / 1C / PRS 101 / PAO1)).